The chain runs to 743 residues: Myb-related protein B (743 aa).

The tract at residues 1–29 (MSRRSRGDDLEDLQYQDTDSDVPEPKENR) is disordered. Acidic residues predominate over residues 9–22 (DLEDLQYQDTDSDV). HTH myb-type domains follow at residues 26–77 (KENR…LRVL), 78–133 (HPDL…NPEV), and 134–184 (KKSS…KRKV). DNA-binding regions (H-T-H motif) lie at residues 54–77 (WKTI…LRVL), 106–129 (WTLI…HNHL), and 157–180 (WAEI…NSTI). 2 disordered regions span residues 221–262 (VERS…SESA) and 381–406 (VTEN…TPVK).

As to quaternary structure, component of the DREAM complex.

The protein localises to the nucleus. The protein is Myb-related protein B (mybl2) of Xenopus laevis (African clawed frog).